A 427-amino-acid polypeptide reads, in one-letter code: Peptidase B (427 aa).

Mn(2+) contacts are provided by K195 and D200. The active site involves K207. Mn(2+) contacts are provided by D218, D277, and E279. R281 is a catalytic residue.

The protein belongs to the peptidase M17 family. In terms of assembly, homohexamer. The cofactor is Mn(2+).

The protein resides in the cytoplasm. The enzyme catalyses Release of an N-terminal amino acid, Xaa, from a peptide or arylamide. Xaa is preferably Glu or Asp but may be other amino acids, including Leu, Met, His, Cys and Gln.. Its function is as follows. Probably plays an important role in intracellular peptide degradation. The chain is Peptidase B from Salmonella arizonae (strain ATCC BAA-731 / CDC346-86 / RSK2980).